The following is a 251-amino-acid chain: uncharacterized protein (251 aa).

This is an uncharacterized protein from Caenorhabditis elegans.